A 502-amino-acid polypeptide reads, in one-letter code: Rab11 family-interacting protein 4B (502 aa).

2 disordered regions span residues 1–49 (MSIQ…EEGI) and 71–98 (SALS…TTSS). Basic and acidic residues predominate over residues 15 to 29 (EEGRGVERDSDRDSA). Residues 71–80 (SALSSASLNE) are compositionally biased toward polar residues. Over residues 81 to 93 (EQFEDYGEGEDGD) the composition is skewed to acidic residues. The stretch at 228 to 482 (DVKTKLKQEN…EEINLRLRQY (255 aa)) forms a coiled coil. Residues 439–501 (EAKNLFATQT…DHNPSILEIK (63 aa)) form the FIP-RBD domain.

In terms of assembly, homodimer. Forms a complex with Rab11 (rab11a or rab11b) and arf6.

It is found in the recycling endosome membrane. Its subcellular location is the cleavage furrow. The protein localises to the midbody. The protein resides in the cytoplasmic vesicle. Acts as a regulator of endocytic traffic by participating in membrane delivery. Required for the abscission step in cytokinesis, possibly by acting as an 'address tag' delivering recycling endosome membranes to the cleavage furrow during late cytokinesis. The chain is Rab11 family-interacting protein 4B (rab11fip4b) from Danio rerio (Zebrafish).